The following is an 84-amino-acid chain: Envelope small membrane protein (84 aa).

The Virion surface portion of the chain corresponds to 1–18 (MFMADAYLADTVWYVGQI). Residues 19-39 (IFIVAICLLVIIVVVAFLATF) form a helical membrane-spanning segment. Over 40-80 (KLCIQLCGMCNTLVLSPSIYVFNRGRQFYEFYNDVKPPVLD) the chain is Intravirion.

The protein belongs to the betacoronaviruses E protein family. In terms of assembly, homopentamer. Interacts with membrane protein M in the budding compartment of the host cell, which is located between endoplasmic reticulum and the Golgi complex. Interacts with Nucleoprotein.

It is found in the host Golgi apparatus membrane. Its function is as follows. Plays a central role in virus morphogenesis and assembly. Acts as a viroporin and self-assembles in host membranes forming pentameric protein-lipid pores that allow ion transport. Also plays a role in the induction of apoptosis. This is Envelope small membrane protein from Porcine hemagglutinating encephalomyelitis virus (strain 67N) (HEV-67N).